A 545-amino-acid polypeptide reads, in one-letter code: Methionine--tRNA ligase (545 aa).

Residues 13–23 (PYANGPLHIGH) carry the 'HIGH' region motif. Zn(2+) contacts are provided by Cys-144, Cys-147, Cys-157, and Cys-160. The short motif at 330–334 (KISKS) is the 'KMSKS' region element. ATP is bound at residue Lys-333.

It belongs to the class-I aminoacyl-tRNA synthetase family. MetG type 1 subfamily. Monomer. Zn(2+) is required as a cofactor.

It localises to the cytoplasm. The catalysed reaction is tRNA(Met) + L-methionine + ATP = L-methionyl-tRNA(Met) + AMP + diphosphate. Functionally, is required not only for elongation of protein synthesis but also for the initiation of all mRNA translation through initiator tRNA(fMet) aminoacylation. The polypeptide is Methionine--tRNA ligase (Blochmanniella floridana).